Consider the following 55-residue polypeptide: Large ribosomal subunit protein bL33 (55 aa).

Belongs to the bacterial ribosomal protein bL33 family.

This Sphingopyxis alaskensis (strain DSM 13593 / LMG 18877 / RB2256) (Sphingomonas alaskensis) protein is Large ribosomal subunit protein bL33.